The following is a 198-amino-acid chain: Twist-related protein 1 (198 aa).

The segment covering 1 to 18 (MMQDVSSSPVSPADDSLS) has biased composition (low complexity). Positions 1–101 (MMQDVSSSPV…GGGSPQSYEE (101 aa)) are disordered. Basic residues predominate over residues 34-43 (RGGRKRRSSR). Composition is skewed to gly residues over residues 46-64 (AGGGAGPGGAAGGVGGGDE) and 79-95 (GCGGGAGGGGSSSGGGS). The region spanning 104–155 (TQRVMANVRERQRTQSLNEAFAALRKIIPTLPSDKLSKIQTLKLAARYIDFL) is the bHLH domain. Residues 157–187 (QVLQSDELDSKMASCSYVAHERLSYAFSVWR) are sufficient for transactivation activity.

Efficient DNA binding requires dimerization with another bHLH protein. Homodimer or heterodimer with E proteins such as TCF3. ID1 binds preferentially to TCF3 but does not interact efficiently with TWIST1 so ID1 levels control the amount of TCF3 available to dimerize with TWIST and thus determine the type of dimer formed.

The protein resides in the nucleus. Its function is as follows. Acts as a transcriptional regulator. Inhibits myogenesis by sequestrating E proteins, inhibiting trans-activation by MEF2, and inhibiting DNA-binding by MYOD1 through physical interaction. This interaction probably involves the basic domains of both proteins. Also represses expression of pro-inflammatory cytokines such as TNFA and IL1B. Regulates cranial suture patterning and fusion. Activates transcription as a heterodimer with E proteins. Regulates gene expression differentially, depending on dimer composition. Homodimers induce expression of FGFR2 and POSTN while heterodimers repress FGFR2 and POSTN expression and induce THBS1 expression. Heterodimerization is also required for osteoblast differentiation. Represses the activity of the circadian transcriptional activator: NPAS2-BMAL1 heterodimer. The polypeptide is Twist-related protein 1 (TWIST1) (Eulemur fulvus fulvus (Brown lemur)).